Here is an 89-residue protein sequence, read N- to C-terminus: Antimicrobial peptide Ar-AMP (89 aa).

Residues 1-25 form the signal peptide; that stretch reads MVNMKSVALIVIVMMAFMMVDPSMG. Positions 26 to 68 constitute a Chitin-binding type-1 domain; the sequence is AGECVQGRCPSGMCCSQFGYCGRGPKYCGRASTTVDHQADAAA. Cystine bridges form between Cys-29/Cys-40, Cys-34/Cys-46, and Cys-39/Cys-53. Positions 56-89 are cleaved as a propeptide — removed in mature form; it reads ASTTVDHQADAAAAAATKTANNPTDAKLAGAGSP.

Functionally, chitin-binding protein that inhibits the growth of the fungal pathogens B.cinerea, F.culmorum, H.sativum and A.consortiale, but not that of R.solani. Induces morphological changes in the fungal pathogens F.culmorum, H.sativum and R.solani, but not in A.consortiale and B.cinerea. Has antibacterial activity against the Gram-positive bacterium B.subtilis, but lacks antibacterial activity against the Gram-negative bacterium E.coli. This is Antimicrobial peptide Ar-AMP from Amaranthus retroflexus (Redroot amaranth).